Consider the following 523-residue polypeptide: NADH-ubiquinone oxidoreductase chain 2 (523 aa).

Transmembrane regions (helical) follow at residues 3–23 (LFGV…IPAI), 30–50 (IILL…NNIG), 62–82 (VTTI…LVLL), 110–130 (SVLA…SSLI), 135–155 (LISM…LATI), 170–190 (FLLG…LYSF), 212–232 (IEIS…AAPF), 246–266 (VVTT…ILEF), 281–301 (LLLI…LAQY), 306–326 (LLTY…AINN), 333–353 (FLFY…ILVA), 386–406 (GLSL…VGFF), 419–439 (GNFF…AYYL), and 490–510 (LVIA…TPLL).

It belongs to the complex I subunit 2 family.

It localises to the mitochondrion inner membrane. The catalysed reaction is a ubiquinone + NADH + 5 H(+)(in) = a ubiquinol + NAD(+) + 4 H(+)(out). Functionally, core subunit of the mitochondrial membrane respiratory chain NADH dehydrogenase (Complex I) that is believed to belong to the minimal assembly required for catalysis. Complex I functions in the transfer of electrons from NADH to the respiratory chain. The immediate electron acceptor for the enzyme is believed to be ubiquinone. The chain is NADH-ubiquinone oxidoreductase chain 2 from Rhizopus oryzae (Mucormycosis agent).